Reading from the N-terminus, the 642-residue chain is Threonine--tRNA ligase (642 aa).

In terms of domain architecture, TGS spans 1–61; the sequence is MPVITLPDGS…ETDSTLSIIT (61 aa). The tract at residues 243–534 is catalytic; that stretch reads DHRKIGKQLD…LTEEFAGFFP (292 aa). Residues Cys334, His385, and His511 each coordinate Zn(2+).

The protein belongs to the class-II aminoacyl-tRNA synthetase family. In terms of assembly, homodimer. Requires Zn(2+) as cofactor.

It localises to the cytoplasm. It catalyses the reaction tRNA(Thr) + L-threonine + ATP = L-threonyl-tRNA(Thr) + AMP + diphosphate + H(+). In terms of biological role, catalyzes the attachment of threonine to tRNA(Thr) in a two-step reaction: L-threonine is first activated by ATP to form Thr-AMP and then transferred to the acceptor end of tRNA(Thr). Also edits incorrectly charged L-seryl-tRNA(Thr). This is Threonine--tRNA ligase from Klebsiella pneumoniae (strain 342).